A 192-amino-acid chain; its full sequence is Adenylate kinase (192 aa).

Residue G10–T18 participates in ATP binding.

The protein belongs to the archaeal adenylate kinase family. As to quaternary structure, monomer.

Its subcellular location is the cytoplasm. It catalyses the reaction AMP + ATP = 2 ADP. The chain is Adenylate kinase (adkA) from Methanococcus voltae.